The sequence spans 107 residues: Quaternary ammonium compound-resistance protein QacC (107 aa).

Transmembrane regions (helical) follow at residues 26 to 46, 57 to 77, and 84 to 104; these read FSKF…FYFL, ITYA…SIII, and LITI…NIFG.

Belongs to the drug/metabolite transporter (DMT) superfamily. Small multidrug resistance (SMR) (TC 2.A.7.1) family.

Its subcellular location is the cell membrane. Functionally, multidrug exporter. Is implicated for the resistance to bacteriocidal quaternary ammonium compounds. The protein is Quaternary ammonium compound-resistance protein QacC of Staphylococcus sp. (strain ST827).